We begin with the raw amino-acid sequence, 1197 residues long: Sensor protein EvgS (1197 aa).

The first 21 residues, 1–21 (MKFLPYIFLLCCGLWSTISFA), serve as a signal peptide directing secretion. Residues 22-325 (DEDYIEYRGI…SMTDENGSVR (304 aa)) are Cytoplasmic-facing. The chain crosses the membrane as a helical span at residues 326–346 (GVMGDILNIITLQTGLNFSPI). Residues 347 to 537 (TVSHNIHAGT…TWDLYSEQFY (191 aa)) lie on the Periplasmic side of the membrane. Residues 538 to 558 (IVTTLSVLLVGSSLLWGFYLL) traverse the membrane as a helical segment. At 559–1197 (RSVRRRKVIQ…EIAVFCQQNN (639 aa)) the chain is on the cytoplasmic side. The 221-residue stretch at 718 to 938 (TMSHEIRTPI…TFTITIPVEI (221 aa)) folds into the Histidine kinase domain. His-721 is modified (phosphohistidine; by autocatalysis). A Response regulatory domain is found at 960 to 1074 (SILIADDHPT…VLKTHLSQLH (115 aa)). 4-aspartylphosphate is present on Asp-1009. One can recognise an HPt domain in the interval 1098–1197 (DLQLMQEILM…EIAVFCQQNN (100 aa)). Residue His-1137 is modified to Phosphohistidine.

Activation requires a sequential transfer of a phosphate group from a His in the primary transmitter domain, to an Asp in the receiver domain and to a His in the secondary transmitter domain.

It is found in the cell inner membrane. The enzyme catalyses ATP + protein L-histidine = ADP + protein N-phospho-L-histidine.. Member of the two-component regulatory system EvgS/EvgA. Phosphorylates EvgA via a four-step phosphorelay in response to environmental signals. The protein is Sensor protein EvgS (evgS) of Escherichia coli O157:H7.